A 335-amino-acid chain; its full sequence is Tetraacyldisaccharide 4'-kinase (335 aa).

Residue 62–69 participates in ATP binding; sequence NVGGTGKT.

Belongs to the LpxK family.

The enzyme catalyses a lipid A disaccharide + ATP = a lipid IVA + ADP + H(+). It functions in the pathway glycolipid biosynthesis; lipid IV(A) biosynthesis; lipid IV(A) from (3R)-3-hydroxytetradecanoyl-[acyl-carrier-protein] and UDP-N-acetyl-alpha-D-glucosamine: step 6/6. In terms of biological role, transfers the gamma-phosphate of ATP to the 4'-position of a tetraacyldisaccharide 1-phosphate intermediate (termed DS-1-P) to form tetraacyldisaccharide 1,4'-bis-phosphate (lipid IVA). This chain is Tetraacyldisaccharide 4'-kinase, found in Methylobacillus flagellatus (strain ATCC 51484 / DSM 6875 / VKM B-1610 / KT).